A 377-amino-acid chain; its full sequence is Serine/threonine-protein phosphatase PP2A-2 catalytic subunit (377 aa).

The segment at 1 to 66 (MDMEIDDPMH…SGIADHKSSK (66 aa)) is disordered. A compositionally biased stretch (basic and acidic residues) spans 28-40 (DDGKNNTKARSND). Serine 38 carries the phosphoserine modification. Threonine 43 is modified (phosphothreonine). Mn(2+) is bound by residues aspartate 125, histidine 127, aspartate 153, and asparagine 185. The active-site Proton donor is histidine 186. Positions 235 and 309 each coordinate Mn(2+). Position 377 is a leucine methyl ester (leucine 377).

Belongs to the PPP phosphatase family. PP-2A subfamily. Inactivated in a complex with phosphatase methylesterase PPE1 (PP2Ai). Interacts with phosphatase 2A activator RRD2, which can reactivate PP2Ai by dissociating the catalytic subunit from the complex. Interacts with TAP42. The cofactor is Mn(2+). In terms of processing, reversibly methyl esterified on Leu-377 by leucine carboxyl methyltransferase 1 (PPM1) and protein phosphatase methylesterase 1 (PPE1). Carboxyl methylation influences the affinity of the catalytic subunit for the different regulatory subunits, thereby modulating the PP2A holoenzyme's substrate specificity, enzyme activity and cellular localization.

It catalyses the reaction O-phospho-L-seryl-[protein] + H2O = L-seryl-[protein] + phosphate. The catalysed reaction is O-phospho-L-threonyl-[protein] + H2O = L-threonyl-[protein] + phosphate. Its function is as follows. Exact function not known, phosphatase 2A performs an essential cellular function. The protein is Serine/threonine-protein phosphatase PP2A-2 catalytic subunit (PPH22) of Saccharomyces cerevisiae (strain ATCC 204508 / S288c) (Baker's yeast).